Reading from the N-terminus, the 274-residue chain is Receptor-like protein 44 (274 aa).

A signal peptide spans 1 to 24; it reads MTRSHRLLLLLLLIFQTAQRLTTA. Topologically, residues 25–223 are extracellular; sequence DPNDEACLKN…PLQEMMMKSK (199 aa). N48, N82, and N95 each carry an N-linked (GlcNAc...) asparagine glycan. LRR repeat units lie at residues 96 to 121, 123 to 144, 145 to 168, and 169 to 192; these read CTNL…QYLV, LAVL…LALC, AYLN…LGLL, and ARLS…LSNR. A glycan (N-linked (GlcNAc...) asparagine) is linked at N127. 2 N-linked (GlcNAc...) asparagine glycosylation sites follow: N191 and N200. A helical transmembrane segment spans residues 224–244; that stretch reads GLSVMAIVGIGLGSGIASLMI. The Cytoplasmic portion of the chain corresponds to 245-274; sequence SFTGVCLWLRITEKKIVEEEGKISQSMPDY.

Belongs to the RLP family.

The protein localises to the cell membrane. The chain is Receptor-like protein 44 from Arabidopsis thaliana (Mouse-ear cress).